The primary structure comprises 156 residues: Small ribosomal subunit protein uS7 (156 aa).

It belongs to the universal ribosomal protein uS7 family. As to quaternary structure, part of the 30S ribosomal subunit. Contacts proteins S9 and S11.

One of the primary rRNA binding proteins, it binds directly to 16S rRNA where it nucleates assembly of the head domain of the 30S subunit. Is located at the subunit interface close to the decoding center, probably blocks exit of the E-site tRNA. This is Small ribosomal subunit protein uS7 from Dehalococcoides mccartyi (strain ATCC BAA-2100 / JCM 16839 / KCTC 5957 / BAV1).